Consider the following 262-residue polypeptide: Ribose-5-phosphate isomerase A (262 aa).

Substrate-binding positions include Thr-33–Thr-36, Asp-89–Asp-92, and Lys-102–Gly-105. Catalysis depends on Glu-111, which acts as the Proton acceptor. Lys-129 provides a ligand contact to substrate.

Belongs to the ribose 5-phosphate isomerase family. In terms of assembly, homodimer.

It catalyses the reaction aldehydo-D-ribose 5-phosphate = D-ribulose 5-phosphate. It participates in carbohydrate degradation; pentose phosphate pathway; D-ribose 5-phosphate from D-ribulose 5-phosphate (non-oxidative stage): step 1/1. Its function is as follows. Catalyzes the reversible conversion of ribose-5-phosphate to ribulose 5-phosphate. The chain is Ribose-5-phosphate isomerase A from Cereibacter sphaeroides (strain KD131 / KCTC 12085) (Rhodobacter sphaeroides).